A 149-amino-acid polypeptide reads, in one-letter code: Secreted RxLR effector protein 47 (149 aa).

Residues 1-22 (MICLLPLIAVMLFVFATHTVLA) form the signal peptide. The RxLR-dEER motif lies at 57–79 (RFLRQETTFEEKPSVNDVHAEER).

Belongs to the RxLR effector family.

Its subcellular location is the secreted. It is found in the host membrane. Its function is as follows. Secreted effector that completely suppresses the host cell death induced by cell death-inducing proteins. The protein is Secreted RxLR effector protein 47 of Plasmopara viticola (Downy mildew of grapevine).